Consider the following 123-residue polypeptide: Large ribosomal subunit protein uL18 (123 aa).

This sequence belongs to the universal ribosomal protein uL18 family. As to quaternary structure, part of the 50S ribosomal subunit; part of the 5S rRNA/L5/L18/L25 subcomplex. Contacts the 5S and 23S rRNAs.

Functionally, this is one of the proteins that bind and probably mediate the attachment of the 5S RNA into the large ribosomal subunit, where it forms part of the central protuberance. This chain is Large ribosomal subunit protein uL18, found in Bifidobacterium animalis subsp. lactis (strain AD011).